We begin with the raw amino-acid sequence, 674 residues long: Methionine--tRNA ligase (674 aa).

A 'HIGH' region motif is present at residues 11–21 (PYANGDLHLGH). Residues C142, C145, C155, and C158 each contribute to the Zn(2+) site. The short motif at 330–334 (KMSKS) is the 'KMSKS' region element. K333 is an ATP binding site. The 101-residue stretch at 574-674 (DFMKVDLRIA…EGAQPGMRVK (101 aa)) folds into the tRNA-binding domain.

The protein belongs to the class-I aminoacyl-tRNA synthetase family. MetG type 1 subfamily. Homodimer. Zn(2+) serves as cofactor.

The protein resides in the cytoplasm. It catalyses the reaction tRNA(Met) + L-methionine + ATP = L-methionyl-tRNA(Met) + AMP + diphosphate. Its function is as follows. Is required not only for elongation of protein synthesis but also for the initiation of all mRNA translation through initiator tRNA(fMet) aminoacylation. This Francisella tularensis subsp. holarctica (strain FTNF002-00 / FTA) protein is Methionine--tRNA ligase.